Reading from the N-terminus, the 125-residue chain is Large ribosomal subunit protein bL17 (125 aa).

It belongs to the bacterial ribosomal protein bL17 family. As to quaternary structure, part of the 50S ribosomal subunit. Contacts protein L32.

This Acinetobacter baumannii (strain AB0057) protein is Large ribosomal subunit protein bL17.